The chain runs to 507 residues: ATP synthase subunit alpha, chloroplastic (507 aa).

170-177 (GDRQTGKT) contributes to the ATP binding site.

It belongs to the ATPase alpha/beta chains family. F-type ATPases have 2 components, CF(1) - the catalytic core - and CF(0) - the membrane proton channel. CF(1) has five subunits: alpha(3), beta(3), gamma(1), delta(1), epsilon(1). CF(0) has four main subunits: a, b, b' and c.

The protein localises to the plastid. It is found in the chloroplast thylakoid membrane. The enzyme catalyses ATP + H2O + 4 H(+)(in) = ADP + phosphate + 5 H(+)(out). In terms of biological role, produces ATP from ADP in the presence of a proton gradient across the membrane. The alpha chain is a regulatory subunit. This is ATP synthase subunit alpha, chloroplastic from Illicium oligandrum (Star anise).